A 453-amino-acid chain; its full sequence is UDP-glucosyltransferase avaP (453 aa).

It belongs to the UDP-glycosyltransferase family.

Its pathway is secondary metabolite biosynthesis. Functionally, UDP-glucosyltransferase; part of the cluster that mediates the biosynthesis of a highly modified cyclo-arginine-tryptophan dipeptide (cRW). The first step of the pathway is perfornmed by the arginine-containing cyclodipeptide synthase (RCPDS) avaA that acts as the scaffold-generating enzyme and is responsible for formation of the cyclo-Arg-Trp (cRW) diketopiperazine. AvaB then acts as a multifunctional flavoenzyme that is responsible for generating the cyclo-Arg-formylkynurenine DKP, which can be deformylated by avaC. AvaB then further catalyzes an additional N-oxidation followed by cyclization and dehydration. The next step is an N-acetylation of the guanidine group catalyzed by the arginine N-acetyltransferase avaD. The roles of the additional enzymes identified within the ava cluster still have to be determined. The protein is UDP-glucosyltransferase avaP of Aspergillus versicolor.